The sequence spans 968 residues: RNA polymerase-associated protein RapA (968 aa).

The 171-residue stretch at 164–334 (DVGRRHAPRV…FARLRLLDPN (171 aa)) folds into the Helicase ATP-binding domain. 177 to 184 (DEVGLGKT) is an ATP binding site. Positions 280–283 (DEAH) match the DEAH box motif. The Helicase C-terminal domain occupies 490-644 (RVEWLMGYLT…TCPTGRTIYD (155 aa)).

The protein belongs to the SNF2/RAD54 helicase family. RapA subfamily. In terms of assembly, interacts with the RNAP. Has a higher affinity for the core RNAP than for the holoenzyme. Its ATPase activity is stimulated by binding to RNAP.

In terms of biological role, transcription regulator that activates transcription by stimulating RNA polymerase (RNAP) recycling in case of stress conditions such as supercoiled DNA or high salt concentrations. Probably acts by releasing the RNAP, when it is trapped or immobilized on tightly supercoiled DNA. Does not activate transcription on linear DNA. Probably not involved in DNA repair. The chain is RNA polymerase-associated protein RapA from Enterobacter sp. (strain 638).